Consider the following 176-residue polypeptide: Peptide deformylase (176 aa).

Residues Cys100 and His142 each contribute to the Fe cation site. Glu143 is an active-site residue. Residue His146 coordinates Fe cation.

This sequence belongs to the polypeptide deformylase family. Fe(2+) is required as a cofactor.

It catalyses the reaction N-terminal N-formyl-L-methionyl-[peptide] + H2O = N-terminal L-methionyl-[peptide] + formate. Removes the formyl group from the N-terminal Met of newly synthesized proteins. Requires at least a dipeptide for an efficient rate of reaction. N-terminal L-methionine is a prerequisite for activity but the enzyme has broad specificity at other positions. The protein is Peptide deformylase of Elusimicrobium minutum (strain Pei191).